Consider the following 96-residue polypeptide: (4S)-4-hydroxy-5-phosphonooxypentane-2,3-dione isomerase (96 aa).

An ABM domain is found at 2–91; it reads HVTLVEINVK…MTGPRKKTTF (90 aa).

The protein belongs to the LsrG family. In terms of assembly, homodimer.

It localises to the cytoplasm. It carries out the reaction (2S)-2-hydroxy-3,4-dioxopentyl phosphate = 3-hydroxy-2,4-dioxopentyl phosphate. Functionally, involved in the degradation of phospho-AI-2, thereby terminating induction of the lsr operon and closing the AI-2 signaling cycle. Catalyzes the conversion of (4S)-4-hydroxy-5-phosphonooxypentane-2,3-dione (P-DPD) to 3-hydroxy-5-phosphonooxypentane-2,4-dione (P-HPD). In Yersinia enterocolitica serotype O:8 / biotype 1B (strain NCTC 13174 / 8081), this protein is (4S)-4-hydroxy-5-phosphonooxypentane-2,3-dione isomerase.